We begin with the raw amino-acid sequence, 574 residues long: Probable E3 ubiquitin-protein ligase ipaH4.5 (574 aa).

An interaction with target proteins region spans residues 1 to 284 (MKPINNHSFF…YHGPQIYFSM (284 aa)). 10 LRR repeats span residues 63 to 82 (REPVLNLSLLKLRSLPPLPL), 83 to 104 (HIRELNISNNELISLPENSPLL), 105 to 122 (TELHVNGNNLNILPTLPS), 123 to 143 (QLIKLNISFNRNLSCLPSLPP), 144 to 165 (YLQSLSARFNSLETLPELPSTL), 166 to 183 (TILRIEGNRLTVLPELPH), 184 to 205 (RLQELFVSGNRLQELPEFPQSL), 206 to 223 (KYLKVGENQLRRLSRLPQ), 224 to 246 (ELLALDVSNNLLTSLPENIITLP), and 247 to 270 (ICTNVNISGNPLSTHVLQSLQRLT). The segment at 285–292 (SDGQQNTL) is linker. The tract at residues 293–574 (HRPLADAVTA…YRQLTDEVLA (282 aa)) is E3 ubiquitin-protein ligase catalytic domain. Positions 295 to 574 (PLADAVTAWF…YRQLTDEVLA (280 aa)) constitute an NEL domain. Residue Cys379 is the Glycyl thioester intermediate of the active site.

It belongs to the LRR-containing bacterial E3 ligase family. In terms of processing, ubiquitinated in the presence of host E1 ubiquitin-activating enzyme, E2 ubiquitin-conjugating enzyme and ubiquitin.

Its subcellular location is the secreted. It localises to the host cytoplasm. It catalyses the reaction S-ubiquitinyl-[E2 ubiquitin-conjugating enzyme]-L-cysteine + [acceptor protein]-L-lysine = [E2 ubiquitin-conjugating enzyme]-L-cysteine + N(6)-ubiquitinyl-[acceptor protein]-L-lysine.. Effector proteins function to alter host cell physiology and promote bacterial survival in host tissues. This protein is an E3 ubiquitin ligase that interferes with host's ubiquitination pathway. This is Probable E3 ubiquitin-protein ligase ipaH4.5 (ipaH4.5) from Shigella flexneri.